Reading from the N-terminus, the 351-residue chain is Signal recognition particle receptor FtsY (351 aa).

Residues 156–163 (GINGTGKT), 238–242 (DTAGR), and 302–305 (TKLD) each bind GTP.

This sequence belongs to the GTP-binding SRP family. FtsY subfamily. In terms of assembly, part of the signal recognition particle protein translocation system, which is composed of SRP and FtsY. SRP is a ribonucleoprotein composed of Ffh and a 4.5S RNA molecule.

It is found in the cell membrane. It localises to the cytoplasm. The catalysed reaction is GTP + H2O = GDP + phosphate + H(+). In terms of biological role, involved in targeting and insertion of nascent membrane proteins into the cytoplasmic membrane. Acts as a receptor for the complex formed by the signal recognition particle (SRP) and the ribosome-nascent chain (RNC). Interaction with SRP-RNC leads to the transfer of the RNC complex to the Sec translocase for insertion into the membrane, the hydrolysis of GTP by both Ffh and FtsY, and the dissociation of the SRP-FtsY complex into the individual components. This is Signal recognition particle receptor FtsY from Buchnera aphidicola subsp. Schizaphis graminum (strain Sg).